The primary structure comprises 401 residues: 1-deoxy-D-xylulose 5-phosphate reductoisomerase (401 aa).

NADPH-binding residues include Thr10, Gly11, Ser12, Ile13, Gly36, Arg37, Asn38, and Asn124. Lys125 serves as a coordination point for 1-deoxy-D-xylulose 5-phosphate. Residue Glu126 coordinates NADPH. Asp150 is a Mn(2+) binding site. 4 residues coordinate 1-deoxy-D-xylulose 5-phosphate: Ser151, Glu152, Ser176, and His199. Glu152 contacts Mn(2+). Gly205 serves as a coordination point for NADPH. Ser212, Asn217, Lys218, and Glu221 together coordinate 1-deoxy-D-xylulose 5-phosphate. Glu221 is a binding site for Mn(2+).

The protein belongs to the DXR family. Mg(2+) serves as cofactor. The cofactor is Mn(2+).

The enzyme catalyses 2-C-methyl-D-erythritol 4-phosphate + NADP(+) = 1-deoxy-D-xylulose 5-phosphate + NADPH + H(+). Its pathway is isoprenoid biosynthesis; isopentenyl diphosphate biosynthesis via DXP pathway; isopentenyl diphosphate from 1-deoxy-D-xylulose 5-phosphate: step 1/6. In terms of biological role, catalyzes the NADPH-dependent rearrangement and reduction of 1-deoxy-D-xylulose-5-phosphate (DXP) to 2-C-methyl-D-erythritol 4-phosphate (MEP). The protein is 1-deoxy-D-xylulose 5-phosphate reductoisomerase of Acaryochloris marina (strain MBIC 11017).